Here is an 831-residue protein sequence, read N- to C-terminus: Phenylalanine--tRNA ligase beta subunit (831 aa).

Residues Gly44–Ala155 form the tRNA-binding domain. One can recognise a B5 domain in the interval Trp414 to Ser489. Mg(2+) is bound by residues Asp467, Asp473, Glu476, and Glu477. An FDX-ACB domain is found at Ser737 to Arg830.

It belongs to the phenylalanyl-tRNA synthetase beta subunit family. Type 1 subfamily. As to quaternary structure, tetramer of two alpha and two beta subunits. The cofactor is Mg(2+).

It is found in the cytoplasm. It catalyses the reaction tRNA(Phe) + L-phenylalanine + ATP = L-phenylalanyl-tRNA(Phe) + AMP + diphosphate + H(+). The protein is Phenylalanine--tRNA ligase beta subunit (pheT) of Mycobacterium tuberculosis (strain ATCC 25618 / H37Rv).